The primary structure comprises 305 residues: MRTRTEIVSTTQTSATWRDYFQLCKPRVVLLMLLTAIVGMCLASPGIVSWRVFLFGNLGIALAASSAAAINHLLEHHLDKLMRRTYRRPIVQGKINRKNAAIFAAILCILSMIILIAFVNLLTALLTFITLIGYAGFYTLYLKHATPQNIVIGGLAGAAPPLLGWVAVTGHIDPPALILLLIIFLWTPPHFWALAIHRIDDYAKANIPMLPNTHGIIYTKINILLYTLLLTAISFLPFVIMTSGWIYFSSVCLLNLGFLYWAIRLLTSQRKEIPMRTFQYSIWYLMLLFTALLVDHYVYLALKLY.

9 helical membrane-spanning segments follow: residues 28–48 (VVLL…PGIV), 52–72 (VFLF…AINH), 102–122 (IFAA…VNLL), 123–143 (TALL…LYLK), 150–170 (IVIG…AVTG), 176–196 (ALIL…ALAI), 221–241 (INIL…FVIM), 243–263 (SGWI…YWAI), and 282–302 (IWYL…YLAL).

The protein belongs to the UbiA prenyltransferase family. Protoheme IX farnesyltransferase subfamily.

Its subcellular location is the cell inner membrane. The enzyme catalyses heme b + (2E,6E)-farnesyl diphosphate + H2O = Fe(II)-heme o + diphosphate. It functions in the pathway porphyrin-containing compound metabolism; heme O biosynthesis; heme O from protoheme: step 1/1. Its function is as follows. Converts heme B (protoheme IX) to heme O by substitution of the vinyl group on carbon 2 of heme B porphyrin ring with a hydroxyethyl farnesyl side group. The polypeptide is Protoheme IX farnesyltransferase (Coxiella burnetii (strain CbuK_Q154) (Coxiella burnetii (strain Q154))).